A 377-amino-acid polypeptide reads, in one-letter code: Ejaculatory bulb-specific protein 1 (377 aa).

The N-terminal stretch at 1 to 20 (MVRQLILVLSLILFCGSSHA) is a signal peptide. A disordered region spans residues 155–253 (PIRPGGLFPG…NRPGRPFPGG (99 aa)). Over residues 165–228 (GPSPGGPSPG…GGSPPSPGGP (64 aa)) the composition is skewed to pro residues.

As to expression, specifically expressed in the ejaculatory bulb and seminal fluid. Detected in mated females 3 minutes after the start of mating, and for at least 3 hours after the start of mating.

It localises to the secreted. In terms of biological role, major protein component of the posterior mating plug. Accessory gland proteins constitute, or are required for formation of the anterior mating plug. Posterior mating plug forms before sperm transfer and the anterior mating plug is formed after the start of mating. The chain is Ejaculatory bulb-specific protein 1 from Drosophila melanogaster (Fruit fly).